The chain runs to 174 residues: Acetolactate synthase small subunit (174 aa).

In terms of domain architecture, ACT spans 4-78 (TLSVLVQDEA…NILNVQDVTN (75 aa)).

This sequence belongs to the acetolactate synthase small subunit family. As to quaternary structure, dimer of large and small chains.

The protein resides in the plastid. The protein localises to the chloroplast. It catalyses the reaction 2 pyruvate + H(+) = (2S)-2-acetolactate + CO2. It participates in amino-acid biosynthesis; L-isoleucine biosynthesis; L-isoleucine from 2-oxobutanoate: step 1/4. Its pathway is amino-acid biosynthesis; L-valine biosynthesis; L-valine from pyruvate: step 1/4. This chain is Acetolactate synthase small subunit (ilvH), found in Pyropia yezoensis (Susabi-nori).